The sequence spans 437 residues: Protein farnesyltransferase subunit beta (437 aa).

PFTB repeat units follow at residues 123-164 (ATDV…CIIG), 174-215 (REKL…SLTN), 222-263 (FEGT…VILK), 270-312 (LKSL…PLLH), and 332-374 (QQAL…SIAQ). Residues 248–251 (HGGY) and 291–294 (RCNK) contribute to the (2E,6E)-farnesyl diphosphate site. Asp-297 and Cys-299 together coordinate Zn(2+). 300-303 (YSFW) is a (2E,6E)-farnesyl diphosphate binding site. Residue His-362 participates in Zn(2+) binding. Ser-432 is subject to Phosphoserine. Residue Thr-436 is modified to Phosphothreonine.

The protein belongs to the protein prenyltransferase subunit beta family. Heterodimer of FNTA and FNTB. The cofactor is Zn(2+).

The catalysed reaction is L-cysteinyl-[protein] + (2E,6E)-farnesyl diphosphate = S-(2E,6E)-farnesyl-L-cysteinyl-[protein] + diphosphate. Essential subunit of the farnesyltransferase complex. Catalyzes the transfer of a farnesyl moiety from farnesyl diphosphate to a cysteine at the fourth position from the C-terminus of several proteins having the C-terminal sequence Cys-aliphatic-aliphatic-X. The chain is Protein farnesyltransferase subunit beta (Fntb) from Mus musculus (Mouse).